The sequence spans 159 residues: 17 kDa surface antigen (159 aa).

The signal sequence occupies residues 1 to 19 (MKLLSKIMIIALATSMLQA). Cysteine 20 carries the N-palmitoyl cysteine lipid modification. The S-diacylglycerol cysteine moiety is linked to residue cysteine 20.

This sequence belongs to the rickettsiale 17 kDa surface antigen family.

It localises to the cell outer membrane. The sequence is that of 17 kDa surface antigen (omp) from Rickettsia conorii (strain ATCC VR-613 / Malish 7).